Reading from the N-terminus, the 156-residue chain is MILPDHKIRKEILIEPFNEKSLQPAGYDLRVGKEAMVNGKFINVEEEGKLVIPPKGHALILTLERVKLPDDVMGDMRLRSTFAREGLLGSFAWVDPGWDGNLTLAFFNSSEEEVILHYEERFVQIAFHRLEEPSKNPYRGIYQGSQHLKLSKRKIR.

DCTP contacts are provided by residues 79-84 (RSTFAR), Asp95, Gln124, and Tyr138.

It belongs to the dCTP deaminase family. In terms of assembly, homotrimer.

The catalysed reaction is dCTP + H2O + H(+) = dUTP + NH4(+). Its pathway is pyrimidine metabolism; dUMP biosynthesis; dUMP from dCTP (dUTP route): step 1/2. Functionally, catalyzes the deamination of dCTP to dUTP. The polypeptide is dCTP deaminase (Thermococcus sibiricus (strain DSM 12597 / MM 739)).